Here is a 243-residue protein sequence, read N- to C-terminus: Thaumatin-like protein (243 aa).

An N-terminal signal peptide occupies residues 1 to 20 (MASINLFLFAFLLLLSHASA). Disulfide bonds link cysteine 29/cysteine 238, cysteine 77/cysteine 87, cysteine 92/cysteine 98, cysteine 144/cysteine 228, cysteine 149/cysteine 211, cysteine 157/cysteine 174, cysteine 178/cysteine 187, and cysteine 188/cysteine 198.

Belongs to the thaumatin family.

The polypeptide is Thaumatin-like protein (Arabidopsis thaliana (Mouse-ear cress)).